The chain runs to 157 residues: Small ribosomal subunit protein uS7 (157 aa).

This sequence belongs to the universal ribosomal protein uS7 family. In terms of assembly, part of the 30S ribosomal subunit. Contacts proteins S9 and S11.

One of the primary rRNA binding proteins, it binds directly to 16S rRNA where it nucleates assembly of the head domain of the 30S subunit. Is located at the subunit interface close to the decoding center, probably blocks exit of the E-site tRNA. This is Small ribosomal subunit protein uS7 from Caulobacter sp. (strain K31).